We begin with the raw amino-acid sequence, 625 residues long: tRNA uridine 5-carboxymethylaminomethyl modification enzyme MnmG (625 aa).

Residues 13 to 18 (GGGHAG), Val-125, and Ser-182 contribute to the FAD site. 276 to 290 (GPRYCPSIEDKITRF) serves as a coordination point for NAD(+). Residue Gln-373 coordinates FAD.

The protein belongs to the MnmG family. Homodimer. Heterotetramer of two MnmE and two MnmG subunits. FAD is required as a cofactor.

Its subcellular location is the cytoplasm. NAD-binding protein involved in the addition of a carboxymethylaminomethyl (cmnm) group at the wobble position (U34) of certain tRNAs, forming tRNA-cmnm(5)s(2)U34. This is tRNA uridine 5-carboxymethylaminomethyl modification enzyme MnmG from Lactococcus lactis subsp. cremoris (strain SK11).